An 84-amino-acid polypeptide reads, in one-letter code: Sulfur carrier protein TusA (84 aa).

Catalysis depends on cysteine 19, which acts as the Cysteine persulfide intermediate.

The protein belongs to the sulfur carrier protein TusA family. As to quaternary structure, interacts with IscS.

The protein localises to the cytoplasm. It participates in tRNA modification. Functionally, sulfur carrier protein involved in sulfur trafficking in the cell. Part of a sulfur-relay system required for 2-thiolation during synthesis of 2-thiouridine of the modified wobble base 5-methylaminomethyl-2-thiouridine (mnm(5)s(2)U) in tRNA. Interacts with IscS and stimulates its cysteine desulfurase activity. Accepts an activated sulfur from IscS, which is then transferred to TusD, and thus determines the direction of sulfur flow from IscS to 2-thiouridine formation. Also appears to be involved in sulfur transfer for the biosynthesis of molybdopterin. The sequence is that of Sulfur carrier protein TusA from Sodalis glossinidius (strain morsitans).